The following is a 656-amino-acid chain: MLSQFTRSLSCFVKPTPPKLNKLTRTMTVLPKILQDARPKVSPELDYSTYSNYQNFKINHTDLNLNISFDDSIVNGFVTFNLNKIDKSCNEIRLDTSFLTVDSVEIDDAKVDFQLKDRLEPLGSQLIINPPTATSLNNEFNLKLGFSTTKDCTALQWLNGEQTSSGKPYVFSQLEAIHARALFPCFDTPSVKSTFNAAITSTLPVVFSGIEQSVVDNGNGTKTYNFKQSVPIPAYLIGIASGDLVSGEIGPRSKVYTEPFRLKDCEWEFSGDVEKFIQAAEKIIFPYEWGTYDILVNVNSYPYGGMESPNMTFATPTLIAYDKSNIDVIAHELAHSWSGNLVTNCSWNHFWLNEGWTVYLERRIVAAIHGEATRHFSALIGWNDLANSISAMKNPDRFSTLIQNLNDGTDPDEAFSSVPYEKGFNLLFHLETILGGPKEFDPFIKHYFTKFSKKSLDSYQFFDTLFEFFADKREILDAVDWETWLYKPGMPPKPKFITTLADNVYSLAEKWATEIKNGNTTEDDLKQAFTAADIKDFNSNQIVLFLDTLVQNKEIQWNNHHTAAKTLLKIYEDSIVKSRNAEVVFRTYRFEITAQLKESYPQLAEWLATVGRMKFVRPGYRLLNSVDRPLALATFEKLQNIYHPICKALVKQDLEA.

Substrate is bound by residues 173-175 and 302-307; these read QLE and PYGGME. H331 is a binding site for Zn(2+). E332 acts as the Proton acceptor in catalysis. Residues H335 and E354 each coordinate Zn(2+). Y420 functions as the Proton donor in the catalytic mechanism.

Belongs to the peptidase M1 family. The cofactor is Zn(2+).

Its subcellular location is the cytoplasm. It is found in the nucleus. It carries out the reaction an epoxide + H2O = an ethanediol. Functionally, aminopeptidase that preferentially cleaves di- and tripeptides. Also has low epoxide hydrolase activity (in vitro). Can hydrolyze the epoxide leukotriene LTA(4) but it forms preferentially 5,6-dihydroxy-7,9,11,14-eicosatetraenoic acid rather than the cytokine leukotriene B(4) as the product compared to the homologous mammalian enzyme (in vitro). This is Leucine aminopeptidase 2 from Vanderwaltozyma polyspora (strain ATCC 22028 / DSM 70294 / BCRC 21397 / CBS 2163 / NBRC 10782 / NRRL Y-8283 / UCD 57-17) (Kluyveromyces polysporus).